Reading from the N-terminus, the 515-residue chain is 2-isopropylmalate synthase (515 aa).

Residues 5–267 (VIIFDTTLRD…HTGLDHKEIH (263 aa)) form the Pyruvate carboxyltransferase domain. Mn(2+) is bound by residues aspartate 14, histidine 202, histidine 204, and asparagine 238. Residues 392-515 (KLNYLSVQSG…EMKQQKFATV (124 aa)) are regulatory domain.

It belongs to the alpha-IPM synthase/homocitrate synthase family. LeuA type 1 subfamily. As to quaternary structure, homodimer. Mn(2+) serves as cofactor.

Its subcellular location is the cytoplasm. It catalyses the reaction 3-methyl-2-oxobutanoate + acetyl-CoA + H2O = (2S)-2-isopropylmalate + CoA + H(+). The protein operates within amino-acid biosynthesis; L-leucine biosynthesis; L-leucine from 3-methyl-2-oxobutanoate: step 1/4. In terms of biological role, catalyzes the condensation of the acetyl group of acetyl-CoA with 3-methyl-2-oxobutanoate (2-ketoisovalerate) to form 3-carboxy-3-hydroxy-4-methylpentanoate (2-isopropylmalate). The protein is 2-isopropylmalate synthase of Vibrio atlanticus (strain LGP32) (Vibrio splendidus (strain Mel32)).